The following is a 455-amino-acid chain: Argininosuccinate lyase (455 aa).

It belongs to the lyase 1 family. Argininosuccinate lyase subfamily.

It is found in the cytoplasm. The enzyme catalyses 2-(N(omega)-L-arginino)succinate = fumarate + L-arginine. The protein operates within amino-acid biosynthesis; L-arginine biosynthesis; L-arginine from L-ornithine and carbamoyl phosphate: step 3/3. The sequence is that of Argininosuccinate lyase from Shewanella sp. (strain ANA-3).